The primary structure comprises 377 residues: 3-dehydroquinate synthase (377 aa).

NAD(+)-binding positions include 115-119, 139-140, Lys152, and Lys161; these read GVIGD and TS. Residues Glu194, His256, and His275 each coordinate Zn(2+).

It belongs to the sugar phosphate cyclases superfamily. Dehydroquinate synthase family. The cofactor is NAD(+). Co(2+) is required as a cofactor. Requires Zn(2+) as cofactor.

It is found in the cytoplasm. It carries out the reaction 7-phospho-2-dehydro-3-deoxy-D-arabino-heptonate = 3-dehydroquinate + phosphate. Its pathway is metabolic intermediate biosynthesis; chorismate biosynthesis; chorismate from D-erythrose 4-phosphate and phosphoenolpyruvate: step 2/7. Functionally, catalyzes the conversion of 3-deoxy-D-arabino-heptulosonate 7-phosphate (DAHP) to dehydroquinate (DHQ). The polypeptide is 3-dehydroquinate synthase (Rhizobium meliloti (strain 1021) (Ensifer meliloti)).